A 475-amino-acid chain; its full sequence is uncharacterized protein (475 aa).

This is an uncharacterized protein from Schizosaccharomyces pombe (strain 972 / ATCC 24843) (Fission yeast).